The sequence spans 250 residues: 1-(5-phosphoribosyl)-5-[(5-phosphoribosylamino)methylideneamino] imidazole-4-carboxamide isomerase (250 aa).

The Proton acceptor role is filled by D8. D129 (proton donor) is an active-site residue.

This sequence belongs to the HisA/HisF family.

It is found in the cytoplasm. It carries out the reaction 1-(5-phospho-beta-D-ribosyl)-5-[(5-phospho-beta-D-ribosylamino)methylideneamino]imidazole-4-carboxamide = 5-[(5-phospho-1-deoxy-D-ribulos-1-ylimino)methylamino]-1-(5-phospho-beta-D-ribosyl)imidazole-4-carboxamide. It functions in the pathway amino-acid biosynthesis; L-histidine biosynthesis; L-histidine from 5-phospho-alpha-D-ribose 1-diphosphate: step 4/9. In Desulfatibacillum aliphaticivorans, this protein is 1-(5-phosphoribosyl)-5-[(5-phosphoribosylamino)methylideneamino] imidazole-4-carboxamide isomerase.